A 341-amino-acid chain; its full sequence is Tetraacyldisaccharide 4'-kinase (341 aa).

64-71 (AVGGSGKT) contacts ATP.

It belongs to the LpxK family.

It carries out the reaction a lipid A disaccharide + ATP = a lipid IVA + ADP + H(+). Its pathway is glycolipid biosynthesis; lipid IV(A) biosynthesis; lipid IV(A) from (3R)-3-hydroxytetradecanoyl-[acyl-carrier-protein] and UDP-N-acetyl-alpha-D-glucosamine: step 6/6. Functionally, transfers the gamma-phosphate of ATP to the 4'-position of a tetraacyldisaccharide 1-phosphate intermediate (termed DS-1-P) to form tetraacyldisaccharide 1,4'-bis-phosphate (lipid IVA). The chain is Tetraacyldisaccharide 4'-kinase from Azoarcus sp. (strain BH72).